A 58-amino-acid chain; its full sequence is UPF0391 membrane protein Bxeno_A2959 (58 aa).

Transmembrane regions (helical) follow at residues 4–24 (WALFFAVVAVIAGVLGFTGVA) and 33–53 (FLFIVFVILCVVFLVLGFVVT).

It belongs to the UPF0391 family.

It is found in the cell membrane. The sequence is that of UPF0391 membrane protein Bxeno_A2959 from Paraburkholderia xenovorans (strain LB400).